A 217-amino-acid polypeptide reads, in one-letter code: ATP synthase subunit a (217 aa).

A run of 6 helical transmembrane segments spans residues 5 to 25, 63 to 83, 89 to 109, 120 to 140, 157 to 177, and 191 to 213; these read EHVITSIVAMVVALGVVLAAG, LIASIGLFVFFGNVMELLPFV, NINTTLALTLIVFFLYHFEGF, FMGPIKALAPFFFIIEIMSHL, GAILLISIIGVLIGNPFTLAV, and LAIVLQAFIFMILSTIYIAGAVV.

It belongs to the ATPase A chain family. F-type ATPases have 2 components, CF(1) - the catalytic core - and CF(0) - the membrane proton channel. CF(1) has five subunits: alpha(3), beta(3), gamma(1), delta(1), epsilon(1). CF(0) has three main subunits: a(1), b(2) and c(9-12). The alpha and beta chains form an alternating ring which encloses part of the gamma chain. CF(1) is attached to CF(0) by a central stalk formed by the gamma and epsilon chains, while a peripheral stalk is formed by the delta and b chains.

The protein resides in the cell inner membrane. Key component of the proton channel; it plays a direct role in the translocation of protons across the membrane. This Hydrogenobaculum sp. (strain Y04AAS1) protein is ATP synthase subunit a.